Consider the following 206-residue polypeptide: 3-isopropylmalate dehydratase small subunit (206 aa).

It belongs to the LeuD family. LeuD type 1 subfamily. In terms of assembly, heterodimer of LeuC and LeuD.

The enzyme catalyses (2R,3S)-3-isopropylmalate = (2S)-2-isopropylmalate. Its pathway is amino-acid biosynthesis; L-leucine biosynthesis; L-leucine from 3-methyl-2-oxobutanoate: step 2/4. Functionally, catalyzes the isomerization between 2-isopropylmalate and 3-isopropylmalate, via the formation of 2-isopropylmaleate. In Leptospira borgpetersenii serovar Hardjo-bovis (strain L550), this protein is 3-isopropylmalate dehydratase small subunit.